Reading from the N-terminus, the 256-residue chain is 6-phosphogluconolactonase (256 aa).

It belongs to the glucosamine/galactosamine-6-phosphate isomerase family. 6-phosphogluconolactonase subfamily.

The enzyme catalyses 6-phospho-D-glucono-1,5-lactone + H2O = 6-phospho-D-gluconate + H(+). Its pathway is carbohydrate degradation; pentose phosphate pathway; D-ribulose 5-phosphate from D-glucose 6-phosphate (oxidative stage): step 2/3. In terms of biological role, hydrolysis of 6-phosphogluconolactone to 6-phosphogluconate. This is 6-phosphogluconolactonase (pgl) from Chlamydia muridarum (strain MoPn / Nigg).